We begin with the raw amino-acid sequence, 213 residues long: NADH-quinone oxidoreductase subunit I (213 aa).

4Fe-4S ferredoxin-type domains are found at residues 74-103 (RFIE…METS) and 113-142 (GNYS…HGTE). 8 residues coordinate [4Fe-4S] cluster: cysteine 83, cysteine 86, cysteine 89, cysteine 93, cysteine 122, cysteine 125, cysteine 128, and cysteine 132.

This sequence belongs to the complex I 23 kDa subunit family. In terms of assembly, NDH-1 is composed of 14 different subunits. Subunits NuoA, H, J, K, L, M, N constitute the membrane sector of the complex. [4Fe-4S] cluster is required as a cofactor.

Its subcellular location is the cell inner membrane. The enzyme catalyses a quinone + NADH + 5 H(+)(in) = a quinol + NAD(+) + 4 H(+)(out). Functionally, NDH-1 shuttles electrons from NADH, via FMN and iron-sulfur (Fe-S) centers, to quinones in the respiratory chain. The immediate electron acceptor for the enzyme in this species is believed to be ubiquinone. Couples the redox reaction to proton translocation (for every two electrons transferred, four hydrogen ions are translocated across the cytoplasmic membrane), and thus conserves the redox energy in a proton gradient. The chain is NADH-quinone oxidoreductase subunit I from Campylobacter jejuni subsp. jejuni serotype O:6 (strain 81116 / NCTC 11828).